A 261-amino-acid chain; its full sequence is Histone H1-I (261 aa).

The segment covering 1 to 22 has biased composition (low complexity); that stretch reads MSETEAAPVVAPAAEAAPAAEA. Disordered regions lie at residues 1–63 and 125–261; these read MSET…PPYI and FKLS…KGKK. Over residues 41 to 50 the composition is skewed to basic and acidic residues; sequence APKEPKAPKE. The H15 domain occupies 58–129; that stretch reads THPPYIEMVK…KVKGSFKLSE (72 aa). The span at 133–142 shows a compositional bias: basic residues; it reads AKAKKSTPKK. 2 repeat units span residues 136-140 and 188-192. Positions 136–250 are 7 X 5 AA repeats of K-K-[AS]-T-P; it reads KKSTPKKAKA…KKAPAKKSTP (115 aa). Residues 139–142 mediate DNA binding; that stretch reads TPKK. Basic and acidic residues predominate over residues 143–198; the sequence is AKADGEAKPKKSEAKPKKAEAVKKTKAPKEKVERPKKEKKEKVEKKKATPKAEKPK. Residues 199 to 203 form a 3; approximate repeat; that stretch reads KAATP. Tandem repeats lie at residues 209-213, 230-234, 236-240, and 246-250. The span at 227–250 shows a compositional bias: basic residues; it reads AKPKKATPSKKAAPKKAPAKKSTP. Over residues 251–261 the composition is skewed to basic and acidic residues; that stretch reads KAKEAKSKGKK.

Belongs to the histone H1/H5 family.

The protein localises to the nucleus. It localises to the chromosome. In terms of biological role, histones H1 are necessary for the condensation of nucleosome chains into higher-order structures. The chain is Histone H1-I (H1-I) from Volvox carteri (Green alga).